Here is a 337-residue protein sequence, read N- to C-terminus: MRLDDEPENALVVSSSPKTVVASGNVKYKGVVQQQNGHWGAQIYADHKRIWLGTFKSADEAATAYDSASIKLRSFDANSHRNFPWSTITLNEPDFQNCYTTETVLNMIRDGSYQHKFRDFLRIRSQIVASINIGGPKQARGEVNQESDKCFSCTQLFQKELTPSDVGKLNRLVIPKKYAVKYMPFISADQSEKEEGEIVGSVEDVEVVFYDRAMRQWKFRYCYWKSSQSFVFTRGWNSFVKEKNLKEKDVIAFYTCDVPNNVKTLEGQRKNFLMIDVHCFSDNGSVVAEEVSMTVHDSSVQVKKTENLVSSMLEDKETKSEENKGGFMLFGVRIECP.

Positions 27–84 (KYKGVVQQQNGHWGAQIYADHKRIWLGTFKSADEAATAYDSASIKLRSFDANSHRNFP) form a DNA-binding region, AP2/ERF. A DNA-binding region (TF-B3) is located at residues 157-271 (FQKELTPSDV…VKTLEGQRKN (115 aa)).

Belongs to the AP2/ERF transcription factor family. RAV subfamily.

The protein localises to the nucleus. Probably acts as a transcriptional activator. Binds to the GCC-box pathogenesis-related promoter element. May be involved in the regulation of gene expression by stress factors and by components of stress signal transduction pathways. This Arabidopsis thaliana (Mouse-ear cress) protein is AP2/ERF and B3 domain-containing transcription factor At1g50680.